The sequence spans 713 residues: Nucleolin (713 aa).

Residues 1–309 (MVKLAKAGKT…QKIEGSEPTT (309 aa)) are disordered. N6-acetyllysine occurs at positions 9, 15, and 16. A compositionally biased stretch (acidic residues) spans 24–46 (VEEDSEDEEMSEDEDDSSGEEEV). A phosphoserine mark is found at S28, S34, S40, and S41. Over residues 56-111 (ATTTPAKKVVVSQTKKAAVPTPAKKAAVTPGKKAAATPAKKAVTPAKVVPTPGKKG) the composition is skewed to low complexity. Residues 58–65 (TTPAKKVV) form repeat 1. The interval 58 to 135 (TTPAKKVVVS…GAVTPAKGAK (78 aa)) is 8 X 8 AA tandem repeats of X-T-P-X-K-K-X-X. S67 carries the post-translational modification Phosphoserine. T69, T76, T84, and T92 each carry phosphothreonine. 3 repeat units span residues 75–82 (PTPAKKAA), 83–90 (VTPGKKAA), and 91–98 (ATPAKKAV). At K96 the chain carries N6-acetyllysine. Position 99 is a phosphothreonine (T99). A 5; truncated repeat occupies 99-104 (TPAKVV). Position 102 is an N6-acetyllysine (K102). Repeat unit 6 spans residues 105–112 (PTPGKKGA). Phosphothreonine is present on T106. An N6-acetyllysine mark is found at K109 and K116. Repeat copies occupy residues 120–127 (PTPGKKGA) and 128–135 (VTPAKGAK). T121 carries the post-translational modification Phosphothreonine. K124 is subject to N6-acetyllysine. S145 and S157 each carry phosphoserine. A compositionally biased stretch (acidic residues) spans 145–168 (SDEDEDEEDEDDSDEDEDEEDEFE). Over residues 169–186 (PPVVKGVKPAKAAPAAPA) the composition is skewed to low complexity. Phosphoserine is present on residues S187 and S213. The segment covering 187-218 (SEDEDEEDDDDEDDDDDDEEEEEEDDSEEEVM) has biased composition (acidic residues). T221 is modified (phosphothreonine). The segment covering 242–275 (EEEEDDEDDEDEEEDEDEEDEEDDEDEDEEEEEE) has biased composition (acidic residues). The segment covering 288 to 304 (MTKQKEAPEAKKQKIEG) has biased composition (basic and acidic residues). A Glycyl lysine isopeptide (Lys-Gly) (interchain with G-Cter in SUMO1); alternate cross-link involves residue K301. Residue K301 forms a Glycyl lysine isopeptide (Lys-Gly) (interchain with G-Cter in SUMO2); alternate linkage. S305 carries the post-translational modification Phosphoserine. 2 RRM domains span residues 311–387 (FNLF…KPKG) and 397–470 (RTLL…YTGE). K322 is subject to N6-acetyllysine. K328 is covalently cross-linked (Glycyl lysine isopeptide (Lys-Gly) (interchain with G-Cter in SUMO1); alternate). A Glycyl lysine isopeptide (Lys-Gly) (interchain with G-Cter in SUMO2); alternate cross-link involves residue K328. K352 bears the N6-acetyllysine mark. S360 carries the post-translational modification Phosphoserine. Residue T371 is modified to Phosphothreonine. A Glycyl lysine isopeptide (Lys-Gly) (interchain with G-Cter in SUMO2) cross-link involves residue K374. K381 participates in a covalent cross-link: Glycyl lysine isopeptide (Lys-Gly) (interchain with G-Cter in SUMO2); alternate. K381 is modified (N6-acetyllysine; alternate). K402 is subject to N6-acetyllysine. A Phosphoserine modification is found at S405. T409 bears the Phosphothreonine mark. K448 carries the N6-acetyllysine modification. S462 and S464 each carry phosphoserine. 2 positions are modified to N6-acetyllysine: K471 and K480. The 75-residue stretch at 489–563 (KTLVLSNLSY…RTIRLELQGP (75 aa)) folds into the RRM 3 domain. K516 participates in a covalent cross-link: Glycyl lysine isopeptide (Lys-Gly) (interchain with G-Cter in SUMO2); alternate. K516 is subject to N6-acetyllysine; alternate. N6-acetyllysine is present on K524. Position 566 is a phosphoserine (S566). K575 carries the post-translational modification N6-acetyllysine. One can recognise an RRM 4 domain in the interval 575–650 (KTLFVKGLSE…NKVTLDWAKP (76 aa)). K580 participates in a covalent cross-link: Glycyl lysine isopeptide (Lys-Gly) (interchain with G-Cter in SUMO2); alternate. K580 carries the N6-acetyllysine; alternate modification. S583 carries the post-translational modification Phosphoserine. K592 participates in a covalent cross-link: Glycyl lysine isopeptide (Lys-Gly) (interchain with G-Cter in SUMO1); alternate. A Glycyl lysine isopeptide (Lys-Gly) (interchain with G-Cter in SUMO2); alternate cross-link involves residue K592. Phosphoserine is present on residues S594 and S622. A Glycyl lysine isopeptide (Lys-Gly) (interchain with G-Cter in SUMO2) cross-link involves residue K627. The interval 645–713 (LDWAKPKGEG…KPQGKKTKFE (69 aa)) is disordered. K649 is subject to N6-acetyllysine. Residues 653 to 702 (EGGFGGRGGGRGGFGGRGGGRGGRGGFGGRGRGGFGGRGGFRGGRGGGGD) are compositionally biased toward gly residues. Residues R659, R663, R669, R673, R676, R682, R684, R690, and R694 each carry the asymmetric dimethylarginine modification. R697 carries the asymmetric dimethylarginine; alternate modification. Position 697 is an omega-N-methylarginine; alternate (R697).

Identified in a IGF2BP1-dependent mRNP granule complex containing untranslated mRNAs. Component of the SWAP complex that consists of NPM1, NCL/nucleolin, PARP1 and SWAP70. Component of a complex which is at least composed of HTATSF1/Tat-SF1, the P-TEFb complex components CDK9 and CCNT1, RNA polymerase II, SUPT5H, and NCL/nucleolin. Interacts with AICDA. Interacts with APTX. Interacts with C1QBP. Interacts with ERBB4. Interacts (via C-terminus) with FMR1 isoform 6 (via N-terminus). Interacts with GZF1; this interaction is important for nucleolar localization of GZF1. Interacts with NSUN2. Interacts with NVL. Interacts (via N-terminus domain) with SETX. Interacts (via RRM1 and C-terminal RRM4/Arg/Gly-rich domains) with TERT; the interaction is important for nucleolar localization of TERT. Interacts with WDR46. Interacts with ZFP36. Interacts with LRRC34. Interacts with RRP1B. Interacts with HNRNPU; this interaction occurs during mitosis. Interacts with RIOK1; RIOK1 recruits NCL to PRMT5 for symmetrically methylation. Interacts with ZBTB7B. Interacts with MDK; this interaction promotes NCL clustering and lateral movements of this complex into lipid rafts leading to MDK internalization. Interacts with HDGF. Interacts with ALKBH2. Interacts with IGFBP5; this interaction is necessary for IGFBP5 localization to the nucleus. Interacts with DDX24 (when ubiquitinated); this interaction may be important during ribosome biogenesis. Some glutamate residues are glycylated by TTLL8. This modification occurs exclusively on glutamate residues and results in a glycine chain on the gamma-carboxyl group. In terms of processing, symmetrically methylated by PRMT5.

The protein resides in the nucleus. It localises to the nucleolus. The protein localises to the cytoplasm. Nucleolin is the major nucleolar protein of growing eukaryotic cells. It is found associated with intranucleolar chromatin and pre-ribosomal particles. It induces chromatin decondensation by binding to histone H1. It is thought to play a role in pre-rRNA transcription and ribosome assembly. May play a role in the process of transcriptional elongation. Binds RNA oligonucleotides with 5'-UUAGGG-3' repeats more tightly than the telomeric single-stranded DNA 5'-TTAGGG-3' repeats. The polypeptide is Nucleolin (Ncl) (Rattus norvegicus (Rat)).